The primary structure comprises 147 residues: Nucleoside diphosphate kinase (147 aa).

ATP is bound by residues K9, F57, R85, T91, R102, and N112. H115 (pros-phosphohistidine intermediate) is an active-site residue.

This sequence belongs to the NDK family. As to quaternary structure, homotetramer. Mg(2+) serves as cofactor.

Its subcellular location is the cytoplasm. It carries out the reaction a 2'-deoxyribonucleoside 5'-diphosphate + ATP = a 2'-deoxyribonucleoside 5'-triphosphate + ADP. The catalysed reaction is a ribonucleoside 5'-diphosphate + ATP = a ribonucleoside 5'-triphosphate + ADP. Major role in the synthesis of nucleoside triphosphates other than ATP. The ATP gamma phosphate is transferred to the NDP beta phosphate via a ping-pong mechanism, using a phosphorylated active-site intermediate. This is Nucleoside diphosphate kinase from Brevibacillus brevis (strain 47 / JCM 6285 / NBRC 100599).